Consider the following 716-residue polypeptide: Segment polarity protein dishevelled homolog DVL-3 (716 aa).

Residues 1-82 enclose the DIX domain; the sequence is MGETKIIYHL…RVVSWLVSAE (82 aa). R27 bears the Omega-N-methylarginine mark. 2 positions are modified to phosphoserine: S48 and S125. The disordered stretch occupies residues 85-235; sequence HPEPAPFCAD…VSRIERSSSF (151 aa). The span at 142–156 shows a compositional bias: basic and acidic residues; the sequence is QRERPRRRDGPEHAA. Residues 175-190 are compositionally biased toward low complexity; that stretch reads SSSTLMSSELETTSFF. S192 carries the phosphoserine modification. Positions 199-212 are enriched in low complexity; the sequence is SRFSSSTEQSSASR. An Omega-N-methylarginine modification is found at R212. Positions 213–226 are enriched in basic residues; that stretch reads LMRRHKRRRRKQKV. Positions 249–321 constitute a PDZ domain; sequence TVTLNMEKYN…NDDAVRVLRE (73 aa). An Asymmetric dimethylarginine; by PRMT1; alternate modification is found at R271. Residues R271 and R342 each carry the symmetric dimethylarginine; by PRMT7; alternate modification. The residue at position 342 (R342) is an Omega-N-methylarginine; alternate. T346 carries the phosphothreonine modification. The region spanning 422-496 is the DEP domain; the sequence is PESGLEVRDR…SEQCYYIFGD (75 aa). The tract at residues 546-691 is disordered; that stretch reads PYNPHPGFPE…PPGRDLASVP (146 aa). A compositionally biased stretch (low complexity) spans 565 to 581; it reads ASSQHSEGSRSSGSNRS. Basic and acidic residues-rich tracts occupy residues 582–595 and 604–622; these read GSDR…KAGD and ESDH…RAPS. R614 is modified (symmetric dimethylarginine; by PRMT7). 2 stretches are compositionally biased toward pro residues: residues 653–663 and 670–682; these read YGPPGVPPLYG and TPPP…PGAP. S697 is subject to Phosphoserine. R698 is modified (omega-N-methylarginine; alternate). A Dimethylated arginine; alternate modification is found at R698. S700 carries the phosphoserine modification.

Belongs to the DSH family. As to quaternary structure, interacts (via the PDZ domain) with the C-terminal regions of VANGL1 and VANGL2. Interacts (via the region containing both the PDZ and DEP domains) with LRRFIP2; the DIX domain may inhibit this interaction. Interacts with CYLD. Interacts with CEP164 and DAB2. Interacts with DCDC2. Interacts with FOXK1 and FOXK2. Interacts with DAAM2. Ubiquitinated. Deubiquitinated by CYLD, which acts on 'Lys-63'-linked ubiquitin chains. Post-translationally, phosphorylated by CSNK1D. In terms of processing, arginine methylation may function as a switch in regulation of function in Wnt signaling. As to expression, ubiquitous.

It localises to the cytoplasm. Functionally, involved in the signal transduction pathway mediated by multiple Wnt genes. The protein is Segment polarity protein dishevelled homolog DVL-3 (Dvl3) of Mus musculus (Mouse).